The sequence spans 354 residues: Chorismate synthase (354 aa).

R48 contributes to the NADP(+) binding site. Residues 125–127 (RAS), A280, 295–299 (KPIPS), and R321 contribute to the FMN site.

This sequence belongs to the chorismate synthase family. In terms of assembly, homotetramer. Requires FMNH2 as cofactor.

The enzyme catalyses 5-O-(1-carboxyvinyl)-3-phosphoshikimate = chorismate + phosphate. Its pathway is metabolic intermediate biosynthesis; chorismate biosynthesis; chorismate from D-erythrose 4-phosphate and phosphoenolpyruvate: step 7/7. Functionally, catalyzes the anti-1,4-elimination of the C-3 phosphate and the C-6 proR hydrogen from 5-enolpyruvylshikimate-3-phosphate (EPSP) to yield chorismate, which is the branch point compound that serves as the starting substrate for the three terminal pathways of aromatic amino acid biosynthesis. This reaction introduces a second double bond into the aromatic ring system. This chain is Chorismate synthase, found in Syntrophus aciditrophicus (strain SB).